The sequence spans 364 residues: METRIVFHIDFDYFYAQCEEIRSPELKSKPVCVCVFSDRGGDSGAIATANYTARKYGAKSGIPIVFAKKRLEERKDAVFLPVDFDYYSEMSEKAMKIMEEFSDVFEYVGRDEAYLDVTKRTEGDFHKASHLAQQIKNSIREKTKLSCSIGISPNKLISKIASDFQKPDGLTIVSPEKVEGFLESLKIRDIPGIGKKTEQRFTEMNLETIGDVKRLDVFTLNKEFGRKSGTYIYNAVRGIDDELVKEREPSIQHGKIVTLKKDSKDYEFLLENTLELCKEVHEIIQKKNQMFKSVGISFVQSDLSNKTKSKMLRNPTMSLEELEKTVEQLLREALENQTATIRRLGVKVSELSESQGQRDITSYF.

In terms of domain architecture, UmuC spans 6–194 (VFHIDFDYFY…LKIRDIPGIG (189 aa)). Residues D10 and D111 each contribute to the Mg(2+) site. E112 is a catalytic residue.

Belongs to the DNA polymerase type-Y family. Monomer. Requires Mg(2+) as cofactor.

The protein localises to the cytoplasm. The enzyme catalyses DNA(n) + a 2'-deoxyribonucleoside 5'-triphosphate = DNA(n+1) + diphosphate. Its function is as follows. Poorly processive, error-prone DNA polymerase involved in untargeted mutagenesis. Copies undamaged DNA at stalled replication forks, which arise in vivo from mismatched or misaligned primer ends. These misaligned primers can be extended by PolIV. Exhibits no 3'-5' exonuclease (proofreading) activity. May be involved in translesional synthesis. The sequence is that of DNA polymerase IV from Nitrosopumilus maritimus (strain SCM1).